The sequence spans 364 residues: Aminomethyltransferase (364 aa).

The protein belongs to the GcvT family. As to quaternary structure, the glycine cleavage system is composed of four proteins: P, T, L and H.

It catalyses the reaction N(6)-[(R)-S(8)-aminomethyldihydrolipoyl]-L-lysyl-[protein] + (6S)-5,6,7,8-tetrahydrofolate = N(6)-[(R)-dihydrolipoyl]-L-lysyl-[protein] + (6R)-5,10-methylene-5,6,7,8-tetrahydrofolate + NH4(+). Its function is as follows. The glycine cleavage system catalyzes the degradation of glycine. The sequence is that of Aminomethyltransferase from Shewanella denitrificans (strain OS217 / ATCC BAA-1090 / DSM 15013).